The following is a 421-amino-acid chain: 3-isopropylmalate dehydratase large subunit (421 aa).

Residues C300, C360, and C363 each coordinate [4Fe-4S] cluster.

Belongs to the aconitase/IPM isomerase family. LeuC type 2 subfamily. Heterodimer of LeuC and LeuD. [4Fe-4S] cluster is required as a cofactor.

The catalysed reaction is (2R,3S)-3-isopropylmalate = (2S)-2-isopropylmalate. It participates in amino-acid biosynthesis; L-leucine biosynthesis; L-leucine from 3-methyl-2-oxobutanoate: step 2/4. Its function is as follows. Catalyzes the isomerization between 2-isopropylmalate and 3-isopropylmalate, via the formation of 2-isopropylmaleate. The polypeptide is 3-isopropylmalate dehydratase large subunit (Lachnoclostridium phytofermentans (strain ATCC 700394 / DSM 18823 / ISDg) (Clostridium phytofermentans)).